Reading from the N-terminus, the 190-residue chain is dCTP deaminase (190 aa).

Position 113 to 118 (113 to 118) interacts with dCTP; the sequence is KSTYAR. The Proton donor/acceptor role is filled by glutamate 139. Glutamine 158, tyrosine 172, lysine 181, and glutamine 182 together coordinate dCTP.

The protein belongs to the dCTP deaminase family. In terms of assembly, homotrimer.

The enzyme catalyses dCTP + H2O + H(+) = dUTP + NH4(+). The protein operates within pyrimidine metabolism; dUMP biosynthesis; dUMP from dCTP (dUTP route): step 1/2. Catalyzes the deamination of dCTP to dUTP. The protein is dCTP deaminase of Chlamydia abortus (strain DSM 27085 / S26/3) (Chlamydophila abortus).